Reading from the N-terminus, the 702-residue chain is Arylphorin (702 aa).

The signal sequence occupies residues 1–16 (MQTVLFLAALVSLAAA). Residues Asn211 and Asn481 are each glycosylated (N-linked (GlcNAc...) asparagine).

The protein belongs to the hemocyanin family. In terms of tissue distribution, hemolymph.

The protein localises to the secreted. In terms of biological role, larval storage protein (LSP) which may serve as a store of amino acids for synthesis of adult proteins. Binds the A.niger cell wall component alpha-1,3-glucan, a fungal pathogen-associated molecular pattern (PAMP) that activates the host immune response. The polypeptide is Arylphorin (LOC113516268) (Galleria mellonella (Greater wax moth)).